The following is a 311-amino-acid chain: L-lactate dehydrogenase 2 (311 aa).

NAD(+)-binding residues include Val14, Asp35, and Arg40. Substrate-binding positions include Arg90 and 122 to 125; that span reads NPCD. NAD(+) is bound by residues 120 to 122 and Thr145; that span reads ATN. 150–153 lines the substrate pocket; it reads DTTR. His177 acts as the Proton acceptor in catalysis. Thr230 is a binding site for substrate.

The protein belongs to the LDH/MDH superfamily. LDH family. In terms of assembly, homotetramer.

It localises to the cytoplasm. The catalysed reaction is (S)-lactate + NAD(+) = pyruvate + NADH + H(+). It functions in the pathway fermentation; pyruvate fermentation to lactate; (S)-lactate from pyruvate: step 1/1. Functionally, catalyzes the conversion of lactate to pyruvate. This Listeria monocytogenes serovar 1/2a (strain ATCC BAA-679 / EGD-e) protein is L-lactate dehydrogenase 2.